We begin with the raw amino-acid sequence, 258 residues long: Imidazole glycerol phosphate synthase subunit HisF (258 aa).

Residues D11 and D130 contribute to the active site.

This sequence belongs to the HisA/HisF family. As to quaternary structure, heterodimer of HisH and HisF.

It localises to the cytoplasm. It catalyses the reaction 5-[(5-phospho-1-deoxy-D-ribulos-1-ylimino)methylamino]-1-(5-phospho-beta-D-ribosyl)imidazole-4-carboxamide + L-glutamine = D-erythro-1-(imidazol-4-yl)glycerol 3-phosphate + 5-amino-1-(5-phospho-beta-D-ribosyl)imidazole-4-carboxamide + L-glutamate + H(+). It participates in amino-acid biosynthesis; L-histidine biosynthesis; L-histidine from 5-phospho-alpha-D-ribose 1-diphosphate: step 5/9. IGPS catalyzes the conversion of PRFAR and glutamine to IGP, AICAR and glutamate. The HisF subunit catalyzes the cyclization activity that produces IGP and AICAR from PRFAR using the ammonia provided by the HisH subunit. The sequence is that of Imidazole glycerol phosphate synthase subunit HisF from Stenotrophomonas maltophilia (strain K279a).